The primary structure comprises 493 residues: Chromosomal replication initiator protein DnaA (493 aa).

Residues 1 to 105 (MSDTIQQEAP…LMYSIVIDKS (105 aa)) are domain I, interacts with DnaA modulators. Residues 105-152 (SQGQPVTIELPHQIDAAPAERSVRPEAPGQKASAERERLEIARPRFES) form a domain II region. Positions 121 to 140 (APAERSVRPEAPGQKASAER) are disordered. Positions 153–370 (NLNPKYTFST…GCIVKLLAAH (218 aa)) are domain III, AAA+ region. Residues G198, G200, K201, and T202 each contribute to the ATP site. A domain IV, binds dsDNA region spans residues 371–493 (SLDNQEIDLQ…LRKRIEIMSM (123 aa)).

It belongs to the DnaA family. As to quaternary structure, oligomerizes as a right-handed, spiral filament on DNA at oriC.

The protein localises to the cytoplasm. In terms of biological role, plays an essential role in the initiation and regulation of chromosomal replication. ATP-DnaA binds to the origin of replication (oriC) to initiate formation of the DNA replication initiation complex once per cell cycle. Binds the DnaA box (a 9 base pair repeat at the origin) and separates the double-stranded (ds)DNA. Forms a right-handed helical filament on oriC DNA; dsDNA binds to the exterior of the filament while single-stranded (ss)DNA is stabiized in the filament's interior. The ATP-DnaA-oriC complex binds and stabilizes one strand of the AT-rich DNA unwinding element (DUE), permitting loading of DNA polymerase. After initiation quickly degrades to an ADP-DnaA complex that is not apt for DNA replication. Binds acidic phospholipids. In Chlorobaculum tepidum (strain ATCC 49652 / DSM 12025 / NBRC 103806 / TLS) (Chlorobium tepidum), this protein is Chromosomal replication initiator protein DnaA.